A 187-amino-acid polypeptide reads, in one-letter code: NADH-quinone oxidoreductase subunit B (187 aa).

Residues C66, C67, C131, and C161 each contribute to the [4Fe-4S] cluster site.

Belongs to the complex I 20 kDa subunit family. NDH-1 is composed of 14 different subunits. Subunits NuoB, C, D, E, F, and G constitute the peripheral sector of the complex. The cofactor is [4Fe-4S] cluster.

It localises to the cell inner membrane. It carries out the reaction a quinone + NADH + 5 H(+)(in) = a quinol + NAD(+) + 4 H(+)(out). In terms of biological role, NDH-1 shuttles electrons from NADH, via FMN and iron-sulfur (Fe-S) centers, to quinones in the respiratory chain. Couples the redox reaction to proton translocation (for every two electrons transferred, four hydrogen ions are translocated across the cytoplasmic membrane), and thus conserves the redox energy in a proton gradient. The sequence is that of NADH-quinone oxidoreductase subunit B from Rhizorhabdus wittichii (strain DSM 6014 / CCUG 31198 / JCM 15750 / NBRC 105917 / EY 4224 / RW1) (Sphingomonas wittichii).